A 45-amino-acid polypeptide reads, in one-letter code: Large ribosomal subunit protein bL34 (45 aa).

This sequence belongs to the bacterial ribosomal protein bL34 family.

This chain is Large ribosomal subunit protein bL34, found in Kocuria rhizophila (strain ATCC 9341 / DSM 348 / NBRC 103217 / DC2201).